The chain runs to 494 residues: Tripartite motif-containing protein 5 (494 aa).

Alanine 2 carries the post-translational modification N-acetylalanine. Residues 15–59 form an RING-type zinc finger; that stretch reads CPICLELLTEPLSLDCGHSFCQACITANHKESTPHQGERSCPLCR. Position 86 is a phosphoserine (serine 86). A B box-type zinc finger spans residues 91-132; that stretch reads QKVGHCARHGEKLLLFCEQDGNVICWLCERSQEHRGHHTFLV. The Zn(2+) site is built by cysteine 96, histidine 99, cysteine 118, and histidine 124. Residues 131–223 are a coiled coil; that stretch reads LVEEVAEKYQ…RLVQSESDMA (93 aa). Residues 186–199 form a required for interaction with GABARAP and for autophagy region; it reads FKQLRDILDCEESK. The B30.2/SPRY domain maps to 280–494; that stretch reads PDLKGMLQAF…LPMTLCSPSS (215 aa).

This sequence belongs to the TRIM/RBCC family. As to quaternary structure, can form homodimers and homotrimers. In addition to lower-order dimerization, also exhibits a higher-order multimerization and both low- and high-order multimerizations are essential for its restriction activity. Interacts with BTBD1 and BTBD2. Interacts with PSMC4, PSMC5, PSMD7 and HSPA8/HSC70. Interacts (via B30.2/SPRY domain) with HSPA1A/B. Interacts with PSMC2, MAP3K7/TAK1, TAB2 and TAB3. Interacts with SQSTM1. Interacts with TRIM6 and TRIM34. Interacts with ULK1 (phosphorylated form), GABARAP, GABARAPL1, GABARAPL2, MAP1LC3A, MAP1LC3C and BECN1. In terms of processing, degraded in a proteasome-independent fashion in the absence of viral infection but in a proteasome-dependent fashion following exposure to restriction sensitive virus. Post-translationally, autoubiquitinated in a RING finger- and UBE2D2-dependent manner. Monoubiquitinated by TRIM21. Deubiquitinated by Yersinia YopJ. Ubiquitination may not lead to proteasomal degradation.

Its subcellular location is the cytoplasm. It is found in the nucleus. The enzyme catalyses S-ubiquitinyl-[E2 ubiquitin-conjugating enzyme]-L-cysteine + [acceptor protein]-L-lysine = [E2 ubiquitin-conjugating enzyme]-L-cysteine + N(6)-ubiquitinyl-[acceptor protein]-L-lysine.. It functions in the pathway protein modification; protein ubiquitination. In terms of biological role, capsid-specific restriction factor that prevents infection from non-host-adapted retroviruses. Blocks viral replication early in the life cycle, after viral entry but before reverse transcription. In addition to acting as a capsid-specific restriction factor, also acts as a pattern recognition receptor that activates innate immune signaling in response to the retroviral capsid lattice. Binding to the viral capsid triggers its E3 ubiquitin ligase activity, and in concert with the heterodimeric ubiquitin conjugating enzyme complex UBE2V1-UBE2N (also known as UBC13-UEV1A complex) generates 'Lys-63'-linked polyubiquitin chains, which in turn are catalysts in the autophosphorylation of the MAP3K7/TAK1 complex (includes TAK1, TAB2, and TAB3). Activation of the MAP3K7/TAK1 complex by autophosphorylation results in the induction and expression of NF-kappa-B and MAPK-responsive inflammatory genes, thereby leading to an innate immune response in the infected cell. Plays a role in regulating autophagy through activation of autophagy regulator BECN1 by causing its dissociation from its inhibitors BCL2 and TAB2. This chain is Tripartite motif-containing protein 5 (TRIM5), found in Saguinus oedipus (Cotton-top tamarin).